We begin with the raw amino-acid sequence, 382 residues long: Anhydro-N-acetylmuramic acid kinase (382 aa).

An ATP-binding site is contributed by 22-29 (GTSMDGVD).

Belongs to the anhydro-N-acetylmuramic acid kinase family.

The enzyme catalyses 1,6-anhydro-N-acetyl-beta-muramate + ATP + H2O = N-acetyl-D-muramate 6-phosphate + ADP + H(+). Its pathway is amino-sugar metabolism; 1,6-anhydro-N-acetylmuramate degradation. It functions in the pathway cell wall biogenesis; peptidoglycan recycling. Functionally, catalyzes the specific phosphorylation of 1,6-anhydro-N-acetylmuramic acid (anhMurNAc) with the simultaneous cleavage of the 1,6-anhydro ring, generating MurNAc-6-P. Is required for the utilization of anhMurNAc either imported from the medium or derived from its own cell wall murein, and thus plays a role in cell wall recycling. In Burkholderia vietnamiensis (strain G4 / LMG 22486) (Burkholderia cepacia (strain R1808)), this protein is Anhydro-N-acetylmuramic acid kinase.